The sequence spans 1396 residues: DNA-directed RNA polymerase subunit beta' (1396 aa).

4 residues coordinate Zn(2+): cysteine 70, cysteine 72, cysteine 85, and cysteine 88. The Mg(2+) site is built by aspartate 460, aspartate 462, and aspartate 464. Positions 814, 889, 896, and 899 each coordinate Zn(2+).

The protein belongs to the RNA polymerase beta' chain family. As to quaternary structure, the RNAP catalytic core consists of 2 alpha, 1 beta, 1 beta' and 1 omega subunit. When a sigma factor is associated with the core the holoenzyme is formed, which can initiate transcription. Requires Mg(2+) as cofactor. Zn(2+) is required as a cofactor.

It carries out the reaction RNA(n) + a ribonucleoside 5'-triphosphate = RNA(n+1) + diphosphate. In terms of biological role, DNA-dependent RNA polymerase catalyzes the transcription of DNA into RNA using the four ribonucleoside triphosphates as substrates. In Hahella chejuensis (strain KCTC 2396), this protein is DNA-directed RNA polymerase subunit beta'.